We begin with the raw amino-acid sequence, 319 residues long: Ribosomal protein L11 methyltransferase (319 aa).

The S-adenosyl-L-methionine site is built by threonine 165, glycine 186, aspartate 208, and asparagine 251.

It belongs to the methyltransferase superfamily. PrmA family.

Its subcellular location is the cytoplasm. The enzyme catalyses L-lysyl-[protein] + 3 S-adenosyl-L-methionine = N(6),N(6),N(6)-trimethyl-L-lysyl-[protein] + 3 S-adenosyl-L-homocysteine + 3 H(+). Its function is as follows. Methylates ribosomal protein L11. The chain is Ribosomal protein L11 methyltransferase from Limosilactobacillus reuteri subsp. reuteri (strain JCM 1112) (Lactobacillus reuteri).